The chain runs to 294 residues: Acetyl-coenzyme A carboxylase carboxyl transferase subunit beta (294 aa).

Positions 30–294 constitute a CoA carboxyltransferase N-terminal domain; sequence IMTKCPECKK…PETGGESDGE (265 aa). Positions 34, 37, 53, and 56 each coordinate Zn(2+). The C4-type zinc-finger motif lies at 34 to 56; it reads CPECKKIMYTKELQKNLMVCNYC.

It belongs to the AccD/PCCB family. In terms of assembly, acetyl-CoA carboxylase is a heterohexamer composed of biotin carboxyl carrier protein (AccB), biotin carboxylase (AccC) and two subunits each of ACCase subunit alpha (AccA) and ACCase subunit beta (AccD). The cofactor is Zn(2+).

The protein resides in the cytoplasm. It catalyses the reaction N(6)-carboxybiotinyl-L-lysyl-[protein] + acetyl-CoA = N(6)-biotinyl-L-lysyl-[protein] + malonyl-CoA. Its pathway is lipid metabolism; malonyl-CoA biosynthesis; malonyl-CoA from acetyl-CoA: step 1/1. In terms of biological role, component of the acetyl coenzyme A carboxylase (ACC) complex. Biotin carboxylase (BC) catalyzes the carboxylation of biotin on its carrier protein (BCCP) and then the CO(2) group is transferred by the transcarboxylase to acetyl-CoA to form malonyl-CoA. The protein is Acetyl-coenzyme A carboxylase carboxyl transferase subunit beta of Listeria welshimeri serovar 6b (strain ATCC 35897 / DSM 20650 / CCUG 15529 / CIP 8149 / NCTC 11857 / SLCC 5334 / V8).